The following is a 2070-amino-acid chain: Multiple PDZ domain protein (2070 aa).

One can recognise an L27 domain in the interval 1-63 (MLEAIDKNRA…SVQQLKDQVN (63 aa)). The PDZ 1 domain maps to 137–224 (VFELLKPPSG…TVQLVIARGS (88 aa)). S230 carries the post-translational modification Phosphoserine. PDZ domains are found at residues 257–337 (TIEL…ARGA) and 377–463 (DVEL…MRRG). S483 is subject to Phosphoserine. PDZ domains lie at 553–634 (VAHV…CRRT) and 700–786 (HIEL…VAKP). Residues S790 and S1078 each carry the phosphoserine modification. The PDZ 6 domain occupies 1008 to 1089 (TINIAKGNSS…IGPDIKITYV (82 aa)). The disordered stretch occupies residues 1121–1140 (DIPELPEREEGEGEESELQN). The 93-residue stretch at 1151-1243 (RVELWREPSK…PVVFMVQSII (93 aa)) folds into the PDZ 7 domain. Position 1170 is an omega-N-methylarginine (R1170). The interval 1278–1324 (ADKAPSQSESEPEKAPLCSVPPPPPSAFAEMGSDHTQSSASKISQDV) is disordered. A compositionally biased stretch (polar residues) spans 1311 to 1321 (DHTQSSASKIS). 2 PDZ domains span residues 1350–1433 (MIEL…IRNK) and 1483–1564 (HLEL…HAEN). The segment at 1567–1612 (SQAVPSAAGAASGEKKNSSQSLMVPQSGSPEPESIRNTSRSSTPAI) is disordered. The segment covering 1584–1610 (SSQSLMVPQSGSPEPESIRNTSRSSTP) has biased composition (polar residues). PDZ domains are found at residues 1629 to 1712 (TIEI…YRDE) and 1725 to 1807 (TIEL…GRIK). Phosphoserine is present on residues S1818 and S1824. 2 consecutive PDZ domains span residues 1862–1948 (TVEM…VAGG) and 1987–2070 (SITL…MVLS).

Interacts with CLDN5, DLG4, GRIN1, F11R/JAM, CLDN1, NG2, CRB1, MPP4 and PALS1. Interacts with HTR2A, HTR2B, HTR2C, PLEKHA1/TAPP1, PLEKHA2/TAPP2, CXADR, SYNGAP1, CAMK2A and CAMK2B. Interacts with FAT4 (via cytoplasmic domain). Interacts with DLL1. In terms of assembly, (Microbial infection) Interacts with human adenovirus type 9 E4-ORF1 protein. As to quaternary structure, (Microbial infection) Interacts with human papillomavirus 18/HPV18 protein E6. As to expression, expressed in heart, brain, placenta, liver, skeletal muscle, kidney and pancreas.

It is found in the cell membrane. Its subcellular location is the apical cell membrane. It localises to the postsynaptic density. The protein resides in the cell projection. The protein localises to the dendrite. It is found in the cell junction. Its subcellular location is the tight junction. It localises to the synapse. The protein resides in the synaptosome. Member of the NMDAR signaling complex that may play a role in control of AMPAR potentiation and synaptic plasticity in excitatory synapses. Promotes clustering of HT2RC at the cell surface. The polypeptide is Multiple PDZ domain protein (MPDZ) (Homo sapiens (Human)).